Here is a 118-residue protein sequence, read N- to C-terminus: Large ribosomal subunit protein bL19 (118 aa).

Belongs to the bacterial ribosomal protein bL19 family.

Functionally, this protein is located at the 30S-50S ribosomal subunit interface and may play a role in the structure and function of the aminoacyl-tRNA binding site. The chain is Large ribosomal subunit protein bL19 from Campylobacter jejuni subsp. jejuni serotype O:6 (strain 81116 / NCTC 11828).